The following is a 466-amino-acid chain: Keratin, type II cytoskeletal 7 (466 aa).

Ser2 is subject to N-acetylserine. 2 positions are modified to phosphoserine: Ser2 and Ser7. Residues 2-91 (SLHFGSQVFS…DPSIQQVRQE (90 aa)) are head. O-linked (GlcNAc) serine glycosylation occurs at Ser12. Residue Arg20 is modified to Dimethylated arginine; alternate. Arg20 is subject to Omega-N-methylarginine; alternate. Phosphoserine is present on residues Ser54, Ser72, and Ser84. Positions 91-127 (EEREQIKTLNNKFASFIDKVRFLEQQNKLLETKWALL) are coil 1A. In terms of domain architecture, IF rod spans 92–404 (EREQIKTLNN…KLLEGEESRL (313 aa)). Thr98 carries the phosphothreonine modification. Positions 128-145 (QEQKSAKSNRLPGIFEAQ) are linker 1. Lys131 is covalently cross-linked (Glycyl lysine isopeptide (Lys-Gly) (interchain with G-Cter in SUMO2)). Residues 146–237 (IAGLRKQLEA…TLYEQELKEL (92 aa)) form a coil 1B region. Lys180 carries the N6-acetyllysine modification. Residues 238 to 261 (QSEVSDTSVVLSMDNNRSLDLDSI) form a linker 12 region. Residue Ser255 is modified to Phosphoserine. Residues 262–400 (IAEVKAQYEE…ATYRKLLEGE (139 aa)) form a coil 2 region. Glycyl lysine isopeptide (Lys-Gly) (interchain with G-Cter in SUMO2) cross-links involve residues Lys266 and Lys287. A Phosphothreonine modification is found at Thr290. Residues Lys297 and Lys332 each participate in a glycyl lysine isopeptide (Lys-Gly) (interchain with G-Cter in SUMO2) cross-link. The tract at residues 401 to 466 (ESRLTGDGVG…TSATSRSPRK (66 aa)) is tail.

Belongs to the intermediate filament family. As to quaternary structure, heterotetramer of two type I and two type II keratins. Interacts with eukaryotic translation initiator factor 3 (eIF3) subunit EIF3S10. Interacts with GPER1. Arg-20 is dimethylated, probably to asymmetric dimethylarginine.

In terms of biological role, blocks interferon-dependent interphase and stimulates DNA synthesis in cells. The sequence is that of Keratin, type II cytoskeletal 7 from Bos taurus (Bovine).